We begin with the raw amino-acid sequence, 219 residues long: Thiamine-phosphate synthase (219 aa).

Residues 48–52 (QFRQK) and Asn84 each bind 4-amino-2-methyl-5-(diphosphooxymethyl)pyrimidine. Mg(2+)-binding residues include Asp85 and Asp104. A 4-amino-2-methyl-5-(diphosphooxymethyl)pyrimidine-binding site is contributed by Ser123. 150–152 (TPS) serves as a coordination point for 2-[(2R,5Z)-2-carboxy-4-methylthiazol-5(2H)-ylidene]ethyl phosphate. Residue Lys153 coordinates 4-amino-2-methyl-5-(diphosphooxymethyl)pyrimidine. 2-[(2R,5Z)-2-carboxy-4-methylthiazol-5(2H)-ylidene]ethyl phosphate contacts are provided by residues Gly181 and 199-200 (IS).

The protein belongs to the thiamine-phosphate synthase family. Mg(2+) serves as cofactor.

It catalyses the reaction 2-[(2R,5Z)-2-carboxy-4-methylthiazol-5(2H)-ylidene]ethyl phosphate + 4-amino-2-methyl-5-(diphosphooxymethyl)pyrimidine + 2 H(+) = thiamine phosphate + CO2 + diphosphate. The catalysed reaction is 2-(2-carboxy-4-methylthiazol-5-yl)ethyl phosphate + 4-amino-2-methyl-5-(diphosphooxymethyl)pyrimidine + 2 H(+) = thiamine phosphate + CO2 + diphosphate. It carries out the reaction 4-methyl-5-(2-phosphooxyethyl)-thiazole + 4-amino-2-methyl-5-(diphosphooxymethyl)pyrimidine + H(+) = thiamine phosphate + diphosphate. It participates in cofactor biosynthesis; thiamine diphosphate biosynthesis; thiamine phosphate from 4-amino-2-methyl-5-diphosphomethylpyrimidine and 4-methyl-5-(2-phosphoethyl)-thiazole: step 1/1. Functionally, condenses 4-methyl-5-(beta-hydroxyethyl)thiazole monophosphate (THZ-P) and 2-methyl-4-amino-5-hydroxymethyl pyrimidine pyrophosphate (HMP-PP) to form thiamine monophosphate (TMP). The chain is Thiamine-phosphate synthase from Helicobacter pylori (strain HPAG1).